The chain runs to 163 residues: Transcription elongation factor GreA (163 aa).

Residues 45 to 65 (NAEYHAAREKQAFIEARINEL) adopt a coiled-coil conformation.

The protein belongs to the GreA/GreB family.

Its function is as follows. Necessary for efficient RNA polymerase transcription elongation past template-encoded arresting sites. The arresting sites in DNA have the property of trapping a certain fraction of elongating RNA polymerases that pass through, resulting in locked ternary complexes. Cleavage of the nascent transcript by cleavage factors such as GreA or GreB allows the resumption of elongation from the new 3'terminus. GreA releases sequences of 2 to 3 nucleotides. This is Transcription elongation factor GreA from Helicobacter hepaticus (strain ATCC 51449 / 3B1).